Here is a 147-residue protein sequence, read N- to C-terminus: MTYRKTDEEVSKLTPEQYRVTQQNGTERPFTGEYTDNKRPGIYVDIVSGEPLFASADKFDSGCGWPSFTKPIVPANVNELRDNSHGMIRTEVRSAHGDSHLGHVFPDGPQDRGGLRYCINSAALRFIPREEMEAEGYGGYFNQVEDI.

Residues 6 to 129 (TDEEVSKLTP…NSAALRFIPR (124 aa)) form the MsrB domain. The Nucleophile role is filled by C118.

Belongs to the MsrB Met sulfoxide reductase family.

It carries out the reaction L-methionyl-[protein] + [thioredoxin]-disulfide + H2O = L-methionyl-(R)-S-oxide-[protein] + [thioredoxin]-dithiol. The sequence is that of Peptide methionine sulfoxide reductase MsrB 2 (msrB2) from Rhizobium meliloti (strain 1021) (Ensifer meliloti).